Here is a 335-residue protein sequence, read N- to C-terminus: MQFIDRSEIEVEGGRGGDGMVAYRREKYVPAGGPAGGDGGHGGAVVLEATANLQTLLDFKYRHRFEADDGTKGGPKNLTGAKGKDLVIAVPCGTVVQDAVTGETIGDLTEPGQRLVVAVGGRGGHGNTHFASNQNRAPDYATEGRLGQQRKLLLELKLLAEVGIIGLPNAGKSTLISVLSAARPRIADYPFTTLVPNLGVVRKVTGDGVVFADIPGLIEGAHQGVGLGHEFLRHIERTRVLVQLIALDSADPLADYRTVIDELGRYGRELLHKSRIVALNKADVCLPEEAEHWRRILSTETGEPVLVISAAARSNLDALLARVWQVLEAPQGVTT.

One can recognise an Obg domain in the interval 1 to 159 (MQFIDRSEIE…RKLLLELKLL (159 aa)). In terms of domain architecture, OBG-type G spans 160 to 328 (AEVGIIGLPN…LLARVWQVLE (169 aa)). Residues 166 to 173 (GLPNAGKS), 191 to 195 (FTTLV), 213 to 216 (DIPG), 280 to 283 (NKAD), and 309 to 311 (SAA) each bind GTP. 2 residues coordinate Mg(2+): serine 173 and threonine 193.

This sequence belongs to the TRAFAC class OBG-HflX-like GTPase superfamily. OBG GTPase family. Monomer. The cofactor is Mg(2+).

The protein localises to the cytoplasm. Functionally, an essential GTPase which binds GTP, GDP and possibly (p)ppGpp with moderate affinity, with high nucleotide exchange rates and a fairly low GTP hydrolysis rate. Plays a role in control of the cell cycle, stress response, ribosome biogenesis and in those bacteria that undergo differentiation, in morphogenesis control. The protein is GTPase Obg of Gloeobacter violaceus (strain ATCC 29082 / PCC 7421).